The following is a 159-amino-acid chain: Peptide deformylase (159 aa).

2 residues coordinate Fe cation: Cys88 and His130. Glu131 is an active-site residue. A Fe cation-binding site is contributed by His134.

Belongs to the polypeptide deformylase family. Fe(2+) serves as cofactor.

It carries out the reaction N-terminal N-formyl-L-methionyl-[peptide] + H2O = N-terminal L-methionyl-[peptide] + formate. Its function is as follows. Removes the formyl group from the N-terminal Met of newly synthesized proteins. Requires at least a dipeptide for an efficient rate of reaction. N-terminal L-methionine is a prerequisite for activity but the enzyme has broad specificity at other positions. The protein is Peptide deformylase of Caldanaerobacter subterraneus subsp. tengcongensis (strain DSM 15242 / JCM 11007 / NBRC 100824 / MB4) (Thermoanaerobacter tengcongensis).